Consider the following 459-residue polypeptide: MYKIDFSKPIHIHFIGIGGISMSGLAEILHEEGFTISGSDSKESDLTKTLAAKGIKVIYGQSADNITTGIDLVVYTAAIHESNPEFAAAKAAGIPMLTRAELLGQIMDNYDYSIAVAGTHGKTTTTSMISEILLAAQTDPTISVGGILSSIHGNLRVGDSEYFISEACEYTNSFLNFRPRYSIILNIEAEHLDFFKDINDIRHSFREYASNTLAGGATIINGEIDRYEEIVAGLPQKIITYGFDSKYDFYPENITYDDKACASFTAMRQGSPLFDVKLSVPGAHNVSNALAAIALSTTLGLDEESILTGLDKFGGADRRFQYKGKVNGVTIIDDYAHHPTEIRATLTAAQKYPHDRLVLCFQPHTYSRTKAFLNDFADVLSMADVVVLADIYAAREQNTYGISSKDILDLLLEKGVNAHYFPSFEEIEKFLSENCVNGDLLITMGAGNVVEIGEDLLKK.

118–124 is an ATP binding site; that stretch reads GTHGKTT.

Belongs to the MurCDEF family.

It is found in the cytoplasm. It carries out the reaction UDP-N-acetyl-alpha-D-muramate + L-alanine + ATP = UDP-N-acetyl-alpha-D-muramoyl-L-alanine + ADP + phosphate + H(+). Its pathway is cell wall biogenesis; peptidoglycan biosynthesis. In terms of biological role, cell wall formation. This chain is UDP-N-acetylmuramate--L-alanine ligase, found in Agathobacter rectalis (strain ATCC 33656 / DSM 3377 / JCM 17463 / KCTC 5835 / VPI 0990) (Eubacterium rectale).